The sequence spans 735 residues: Catalase-peroxidase (735 aa).

A disordered region spans residues 1-25; that stretch reads MSDSKCPVTGKSSRQVAGGGTSNRD. Positions 95–223 form a cross-link, tryptophyl-tyrosyl-methioninium (Trp-Tyr) (with M-249); that stretch reads WHSAGTYRMG…LAAVQMGLIY (129 aa). Histidine 96 serves as the catalytic Proton acceptor. Residues 223–249 constitute a cross-link (tryptophyl-tyrosyl-methioninium (Tyr-Met) (with W-95)); the sequence is YINPEGPDGNPDPVASGRDVRETFARM. Histidine 264 provides a ligand contact to heme b.

It belongs to the peroxidase family. Peroxidase/catalase subfamily. As to quaternary structure, homodimer or homotetramer. Requires heme b as cofactor. In terms of processing, formation of the three residue Trp-Tyr-Met cross-link is important for the catalase, but not the peroxidase activity of the enzyme.

The catalysed reaction is H2O2 + AH2 = A + 2 H2O. The enzyme catalyses 2 H2O2 = O2 + 2 H2O. In terms of biological role, bifunctional enzyme with both catalase and broad-spectrum peroxidase activity. This Trichlorobacter lovleyi (strain ATCC BAA-1151 / DSM 17278 / SZ) (Geobacter lovleyi) protein is Catalase-peroxidase.